Consider the following 654-residue polypeptide: Probable Xaa-Pro aminopeptidase P (654 aa).

Mn(2+) is bound by residues aspartate 449, aspartate 460, glutamate 558, and glutamate 572.

It belongs to the peptidase M24B family. It depends on Mn(2+) as a cofactor.

It catalyses the reaction Release of any N-terminal amino acid, including proline, that is linked to proline, even from a dipeptide or tripeptide.. Functionally, catalyzes the removal of a penultimate prolyl residue from the N-termini of peptides. The protein is Probable Xaa-Pro aminopeptidase P (ampp) of Aspergillus fumigatus (strain CBS 144.89 / FGSC A1163 / CEA10) (Neosartorya fumigata).